Reading from the N-terminus, the 96-residue chain is (4S)-4-hydroxy-5-phosphonooxypentane-2,3-dione isomerase (96 aa).

Positions 2–91 constitute an ABM domain; that stretch reads HVTLVEINVH…MTGPRTKKVF (90 aa).

This sequence belongs to the LsrG family. As to quaternary structure, homodimer.

Its subcellular location is the cytoplasm. It catalyses the reaction (2S)-2-hydroxy-3,4-dioxopentyl phosphate = 3-hydroxy-2,4-dioxopentyl phosphate. Functionally, involved in the degradation of phospho-AI-2, thereby terminating induction of the lsr operon and closing the AI-2 signaling cycle. Catalyzes the conversion of (4S)-4-hydroxy-5-phosphonooxypentane-2,3-dione (P-DPD) to 3-hydroxy-5-phosphonooxypentane-2,4-dione (P-HPD). This chain is (4S)-4-hydroxy-5-phosphonooxypentane-2,3-dione isomerase, found in Salmonella typhimurium (strain LT2 / SGSC1412 / ATCC 700720).